Reading from the N-terminus, the 106-residue chain is Toxin-like structure LSTX-D8 (106 aa).

An N-terminal signal peptide occupies residues 1–20; that stretch reads MTKVLVVVALLVTLISYSSS. A propeptide spanning residues 21 to 41 is cleaved from the precursor; sequence EGIDDLEADELLSLMANEQTR. Cystine bridges form between C45–C60, C52–C69, C59–C85, and C71–C83.

The protein belongs to the neurotoxin 19 (CSTX) family. 02 (D7) subfamily. As to expression, expressed by the venom gland.

It localises to the secreted. The polypeptide is Toxin-like structure LSTX-D8 (Lycosa singoriensis (Wolf spider)).